A 403-amino-acid chain; its full sequence is NADH-quinone oxidoreductase subunit D (403 aa).

Belongs to the complex I 49 kDa subunit family. In terms of assembly, NDH-1 is composed of 14 different subunits. Subunits NuoB, C, D, E, F, and G constitute the peripheral sector of the complex.

Its subcellular location is the cell inner membrane. The catalysed reaction is a quinone + NADH + 5 H(+)(in) = a quinol + NAD(+) + 4 H(+)(out). In terms of biological role, NDH-1 shuttles electrons from NADH, via FMN and iron-sulfur (Fe-S) centers, to quinones in the respiratory chain. The immediate electron acceptor for the enzyme in this species is believed to be ubiquinone. Couples the redox reaction to proton translocation (for every two electrons transferred, four hydrogen ions are translocated across the cytoplasmic membrane), and thus conserves the redox energy in a proton gradient. The chain is NADH-quinone oxidoreductase subunit D from Ruegeria sp. (strain TM1040) (Silicibacter sp.).